The chain runs to 294 residues: Shikimate dehydrogenase (NADP(+)) (294 aa).

Shikimate is bound by residues 22–24 (SLS) and Ser-69. The Proton acceptor role is filled by Lys-73. Shikimate is bound by residues Asn-94 and Asp-111. NADP(+) contacts are provided by residues 135–139 (GAGGA) and Leu-236. A shikimate-binding site is contributed by Tyr-238. Position 260 (Gly-260) interacts with NADP(+).

Belongs to the shikimate dehydrogenase family. In terms of assembly, homodimer.

The catalysed reaction is shikimate + NADP(+) = 3-dehydroshikimate + NADPH + H(+). It participates in metabolic intermediate biosynthesis; chorismate biosynthesis; chorismate from D-erythrose 4-phosphate and phosphoenolpyruvate: step 4/7. Functionally, involved in the biosynthesis of the chorismate, which leads to the biosynthesis of aromatic amino acids. Catalyzes the reversible NADPH linked reduction of 3-dehydroshikimate (DHSA) to yield shikimate (SA). The protein is Shikimate dehydrogenase (NADP(+)) of Streptococcus equi subsp. zooepidemicus (strain MGCS10565).